Consider the following 376-residue polypeptide: Tetraacyldisaccharide 4'-kinase (376 aa).

An ATP-binding site is contributed by 51–58; it reads AVGGTGKT.

Belongs to the LpxK family.

It carries out the reaction a lipid A disaccharide + ATP = a lipid IVA + ADP + H(+). Its pathway is glycolipid biosynthesis; lipid IV(A) biosynthesis; lipid IV(A) from (3R)-3-hydroxytetradecanoyl-[acyl-carrier-protein] and UDP-N-acetyl-alpha-D-glucosamine: step 6/6. In terms of biological role, transfers the gamma-phosphate of ATP to the 4'-position of a tetraacyldisaccharide 1-phosphate intermediate (termed DS-1-P) to form tetraacyldisaccharide 1,4'-bis-phosphate (lipid IVA). In Bacteroides fragilis (strain YCH46), this protein is Tetraacyldisaccharide 4'-kinase.